We begin with the raw amino-acid sequence, 216 residues long: Adenylate kinase (216 aa).

ATP is bound at residue 10–15 (GAGKGT). Positions 30–59 (STGDIFRKNISEKTPLGVKAKEYMDKGQLV) are NMP. AMP is bound by residues threonine 31, arginine 36, 57–59 (QLV), 85–88 (GFPR), and glutamine 92. The segment at 126–163 (GRRVCPSCGASYHIKFNPPKIEGLCDVCKKEVIQRKDD) is LID. Arginine 127 is a binding site for ATP. Zn(2+)-binding residues include cysteine 130 and cysteine 133. 136–137 (SY) is a binding site for ATP. The Zn(2+) site is built by cysteine 150 and cysteine 153. The AMP site is built by arginine 160 and arginine 171. Glutamine 199 contributes to the ATP binding site.

This sequence belongs to the adenylate kinase family. In terms of assembly, monomer.

The protein localises to the cytoplasm. The enzyme catalyses AMP + ATP = 2 ADP. The protein operates within purine metabolism; AMP biosynthesis via salvage pathway; AMP from ADP: step 1/1. Functionally, catalyzes the reversible transfer of the terminal phosphate group between ATP and AMP. Plays an important role in cellular energy homeostasis and in adenine nucleotide metabolism. The sequence is that of Adenylate kinase from Clostridium novyi (strain NT).